We begin with the raw amino-acid sequence, 1158 residues long: MTHGEELGSDVHQDSIVLTYLEGLLMHQAAGGSGTAVDKKSAGHNEEDQNFNISGSAFPTCQSNGPVLNTHTYQGSGMLHLKKARLLQSSEDWNAAKRKRLSDSIMNLNVKKEALLAGMVDSVPKGKQDSTLLASLLQSFSSRLQTVALSQQIRQSLKEQGYALSHDSLKVEKDLRCYGVASSHLKTLLKKSKVKDQKPDTNLPDVTKNLIRDRFAESPHHVGQSGTKVMSEPLSCAARLQAVASMVEKRASPATSPKPSVACSQLALLLSSEAHLQQYSREHALKTQNANQAASERLAAMARLQENGQKDVGSYQLPKGMSSHLNGQARTSSSKLMASKSSATVFQNPMGIIPSSPKNAGYKNSLERNNIKQAANNSLLLHLLKSQTIPKPMNGHSHSERGSIFEESSTPTTIDEYSDNNPSFTDDSSGDESSYSNCVPIDLSCKHRTEKSESDQPVSLDNFTQSLLNTWDPKVPDVDIKEDQDTSKNSKLNSHQKVTLLQLLLGHKNEENVEKNTSPQGVHNDVSKFNTQNYARTSVIESPSTNRTTPVSTPPLLTSSKAGSPINLSQHSLVIKWNSPPYVCSTQSEKLTNTASNHSMDLTKSKDPPGEKPAQNEGAQNSATFSASKLLQNLAQCGMQSSMSVEEQRPSKQLLTGNTDKPIGMIDRLNSPLLSNKTNAVEENKAFSSQPTGPEPGLSGSEIENLLERRTVLQLLLGNPNKGKSEKKEKTPLRDESTQEHSERALSEQILMVKIKSEPCDDLQIPNTNVHLSHDAKSAPFLGMAPAVQRSAPALPVSEDFKSEPVSPQDFSFSKNGLLSRLLRQNQDSYLADDSDRSHRNNEMALLESKNLCMVPKKRKLYTEPLENPFKKMKNNIVDAANNHSAPEVLYGSLLNQEELKFSRNDLEFKYPAGHGSASESEHRSWARESKSFNVLKQLLLSENCVRDLSPHRSNSVADSKKKGHKNNVTNSKPEFSISSLNGLMYSSTQPSSCMDNRTFSYPGVVKTPVSPTFPEHLGCAGSRPESGLLNGCSMPSEKGPIKWVITDAEKNEYEKDSPRLTKTNPILYYMLQKGGNSVTSRETQDKDIWREASSAESVSQVTAKEELLPTAETKASFFNLRSPYNSHMGNNASRPHSANGEVYGLLGSVLTIKKESE.

The tract at residues 1 to 415 (MTHGEELGSD…EESSTPTTID (415 aa)) is interaction with ZNF366. Positions 21–25 (LEGLL) match the LXXLL motif 1 motif. A disordered region spans residues 33–56 (SGTAVDKKSAGHNEEDQNFNISGS). Positions 37–47 (VDKKSAGHNEE) are enriched in basic and acidic residues. The repression domain 1 stretch occupies residues 78–333 (MLHLKKARLL…HLNGQARTSS (256 aa)). Ser-104 carries the phosphoserine modification. At Lys-111 the chain carries N6-acetyllysine; alternate. Residue Lys-111 forms a Glycyl lysine isopeptide (Lys-Gly) (interchain with G-Cter in SUMO2); alternate linkage. An LXXLL motif 2 motif is present at residues 133-137 (LASLL). Position 158 is an N6-acetyllysine (Lys-158). Lys-170 participates in a covalent cross-link: Glycyl lysine isopeptide (Lys-Gly) (interchain with G-Cter in SUMO2). Residues 185–189 (LKTLL) carry the LXXLL motif 3 motif. Glycyl lysine isopeptide (Lys-Gly) (interchain with G-Cter in SUMO2) cross-links involve residues Lys-195 and Lys-198. At Thr-207 the chain carries Phosphothreonine. Ser-218 is modified (phosphoserine). Residues 266–270 (LALLL) carry the LXXLL motif 4 motif. N6-acetyllysine is present on residues Lys-286 and Lys-310. At Ser-356 the chain carries Phosphoserine. A Glycyl lysine isopeptide (Lys-Gly) (interchain with G-Cter in SUMO2) cross-link involves residue Lys-372. Ser-378 bears the Phosphoserine mark. The LXXLL motif 5 motif lies at 380–384 (LLHLL). The segment at 393–435 (MNGHSHSERGSIFEESSTPTTIDEYSDNNPSFTDDSSGDESSY) is disordered. Residues 406–435 (EESSTPTTIDEYSDNNPSFTDDSSGDESSY) are compositionally biased toward polar residues. A repression domain 2 region spans residues 410–700 (TPTTIDEYSD…PTGPEPGLSG (291 aa)). The interval 431–472 (DESSYSNCVPIDLSCKHRTEKSESDQPVSLDNFTQSLLNTWD) is required for targeting to small nuclear foci. Positions 440–446 (PIDLSCK) match the CTBP-binding; principal site motif. 2 positions are modified to N6-acetyllysine: Lys-446 and Lys-481. At Ser-487 the chain carries Phosphoserine. The LXXLL motif 6 motif lies at 500–504 (LLQLL). Lys-508 participates in a covalent cross-link: Glycyl lysine isopeptide (Lys-Gly) (interchain with G-Cter in SUMO2). Ser-518 carries the phosphoserine modification. Lys-528 carries the post-translational modification N6-acetyllysine. Residues 540–563 (IESPSTNRTTPVSTPPLLTSSKAG) are disordered. A Phosphoserine modification is found at Ser-542. Positions 548-560 (TTPVSTPPLLTSS) are enriched in low complexity. Ser-564 bears the Phosphoserine mark. 2 short sequence motifs (CTBP-binding) span residues 565–569 (PINLS) and 599–603 (SMDLT). Disordered stretches follow at residues 592 to 622 (TNTA…AQNS) and 641 to 663 (SSMS…DKPI). Basic and acidic residues predominate over residues 601 to 610 (DLTKSKDPPG). Position 606 is an N6-acetyllysine (Lys-606). A compositionally biased stretch (polar residues) spans 641 to 659 (SSMSVEEQRPSKQLLTGNT). Ser-671 carries the phosphoserine modification. The short motif at 713-717 (LQLLL) is the LXXLL motif 7 element. The tract at residues 716-745 (LLGNPNKGKSEKKEKTPLRDESTQEHSERA) is disordered. A compositionally biased stretch (basic and acidic residues) spans 723–745 (GKSEKKEKTPLRDESTQEHSERA). The tract at residues 735–885 (DESTQEHSER…NIVDAANNHS (151 aa)) is repression domain 3. Residues 753–1158 (VKIKSEPCDD…SVLTIKKESE (406 aa)) form an interaction with ZNF366 region. Glycyl lysine isopeptide (Lys-Gly) (interchain with G-Cter in SUMO2) cross-links involve residues Lys-756 and Lys-802. Ser-807 is subject to Phosphoserine. Residues 819 to 823 (LSRLL) carry the LXXLL motif 8 motif. Glycyl lysine isopeptide (Lys-Gly) (interchain with G-Cter in SUMO2) cross-links involve residues Lys-850 and Lys-901. An N6-acetyllysine; alternate modification is found at Lys-931. Lys-931 participates in a covalent cross-link: Glycyl lysine isopeptide (Lys-Gly) (interchain with G-Cter in SUMO2); alternate. Residues 936 to 940 (LKQLL) carry the LXXLL motif 9 motif. The CTBP-binding signature appears at 946–950 (VRDLS). The disordered stretch occupies residues 950–974 (SPHRSNSVADSKKKGHKNNVTNSKP). Residue Ser-1001 is modified to Phosphoserine. A Ligand-dependent nuclear receptor binding motif is present at residues 1061-1074 (LTKTNPILYYMLQK). Residues Lys-1105, Lys-1115, and Lys-1154 each participate in a glycyl lysine isopeptide (Lys-Gly) (interchain with G-Cter in SUMO2) cross-link. Positions 1118–1158 (FFNLRSPYNSHMGNNASRPHSANGEVYGLLGSVLTIKKESE) are repression domain 4.

In terms of assembly, interacts with RARA and RXRB homodimers and RARA/RXRB heterodimers in the presence of ligand. Interacts with HDAC1 and HDAC3 via its N-terminal domain. Interacts with NR2C1 (sumoylated form and via the ligand-binding domain); the interaction results in promoting the repressor activity of NR2C1. Interacts with CTBP1, CTBP2, ESR1, HDAC1, HDAC2, HDAC5, HDAC6, NR2C2, NR3C1, NR3C2, YWHAH, JUN and FOS. Found in a complex with both NR3C1 and YWHAH. Interacts with ZNF366. Interacts with RORA. Post-translationally, acetylation regulates its nuclear translocation and corepressive activity. Acetylation abolishes interaction with CTBP1. Phosphorylation enhances interaction with YWHAH.

The protein localises to the nucleus. In terms of biological role, modulates transcriptional activation by steroid receptors such as NR3C1, NR3C2 and ESR1. Also modulates transcriptional repression by nuclear hormone receptors. Positive regulator of the circadian clock gene expression: stimulates transcription of BMAL1, CLOCK and CRY1 by acting as a coactivator for RORA and RORC. Involved in the regulation of ovarian function. Plays a role in renal development. This chain is Nuclear receptor-interacting protein 1 (NRIP1), found in Homo sapiens (Human).